Reading from the N-terminus, the 475-residue chain is MEGLLTRCRALPALATCSRQLSGYVPCRFHHCAPRRGRRLLLSRVFQPQNLREDRVLSLQDKSDDLTCKSQRLMLQVGLIYPASPGCYHLLPYTVRAMEKLVRVIDQEMQAIGGQKVNMPSLSPAELWQATNRWDLMGKELLRLRDRHGKEYCLGPTHEEAITALIASQKKLSYKQLPFLLYQVTRKFRDEPRPRFGLLRGREFYMKDMYTFDSSPEAAQQTYSLVCDAYCSLFNKLGLPFVKVQADVGTIGGTVSHEFQLPVDIGEDRLAICPRCSFSANMETLDLSQMNCPACQGPLTKTKGIEVGHTFYLGTKYSSIFNAQFTNVCGKPTLAEMGCYGLGVTRILAAAIEVLSTEDCVRWPSLLAPYQACLIPPKKGSKEQAASELIGQLYDHITEAVPQLHGEVLLDDRTHLTIGNRLKDANKFGYPFVIIAGKRALEDPAHFEVWCQNTGEVAFLTKDGVMDLLTPVQTV.

The N-terminal 29 residues, 1–29 (MEGLLTRCRALPALATCSRQLSGYVPCRF), are a transit peptide targeting the mitochondrion.

The protein belongs to the class-II aminoacyl-tRNA synthetase family.

It is found in the mitochondrion matrix. The catalysed reaction is tRNA(Pro) + L-proline + ATP = L-prolyl-tRNA(Pro) + AMP + diphosphate. Mitochondrial aminoacyl-tRNA synthetase that catalyzes the specific attachment of the proline amino acid (aa) to the homologous transfer RNA (tRNA), further participating in protein synthesis. The reaction occurs in a two steps: proline is first activated by ATP to form Pro-AMP and then transferred to the acceptor end of tRNA(Pro). This is Probable proline--tRNA ligase, mitochondrial from Homo sapiens (Human).